The primary structure comprises 722 residues: Homeobox-leucine zipper protein HDG11 (722 aa).

Residues 1-19 (MSFVVGVGGSGSGSGGDGG) are compositionally biased toward gly residues. A disordered region spans residues 1–42 (MSFVVGVGGSGSGSGGDGGGSHHHDGSETDRKKKRYHRHTAQ). Residues 20-31 (GSHHHDGSETDR) are compositionally biased toward basic and acidic residues. A DNA-binding region (homeobox) is located at residues 32–91 (KKKRYHRHTAQQIQRLESSFKECPHPDEKQRNQLSRELGLAPRQIKFWFQNRRTQLKAQH). Residues 81–161 (QNRRTQLKAQ…LERMSTIASK (81 aa)) are a coiled coil. One can recognise an START domain in the interval 227-460 (SDMDKPIMTG…LQRMCERFAS (234 aa)).

This sequence belongs to the HD-ZIP homeobox family. Class IV subfamily. As to quaternary structure, interacts with BBM. In terms of tissue distribution, expressed in apical meristems and young epidermal tissue including trichomes and stipules. Expressed in lateral root tips, the L1 layer of apical inflorescence meristems and early flower primordia, carpel and petal epidermis, stigma papillae, ovule primordia, nucellus and embryo.

The protein localises to the nucleus. In terms of biological role, transcription factor which acts as a positive regulator of drought stress tolerance. Can transactivate CIPK3, NCED3 and ERECTA. Transactivates several cell-wall-loosening protein genes by directly binding to HD motifs in their promoters. These target genes play important roles in coordinating cell-wall extensibility with root development and growth. Transactivates CYP74A/AOS, AOC3, OPR3 and 4CLL5/OPCL1 genes by directly binding to HD motifs in their promoters. These target genes are involved in jasmonate (JA) biosynthesis, and JA signaling affects root architecture by activating auxin signaling, which promotes lateral root formation. Acts as a negative regulator of trichome branching. Required for the establishment of giant cell identity on the abaxial side of sepals. Seems to promote cell differentiation. May regulate cell differentiation and proliferation during root and shoot meristem development. In Arabidopsis thaliana (Mouse-ear cress), this protein is Homeobox-leucine zipper protein HDG11.